The primary structure comprises 273 residues: Orotidine 5'-phosphate decarboxylase (273 aa).

Lysine 97 (proton donor) is an active-site residue.

Belongs to the OMP decarboxylase family. Type 2 subfamily.

The enzyme catalyses orotidine 5'-phosphate + H(+) = UMP + CO2. The protein operates within pyrimidine metabolism; UMP biosynthesis via de novo pathway; UMP from orotate: step 2/2. The polypeptide is Orotidine 5'-phosphate decarboxylase (Cellvibrio japonicus (strain Ueda107) (Pseudomonas fluorescens subsp. cellulosa)).